A 179-amino-acid polypeptide reads, in one-letter code: DELTA-miturgitoxin-Cp2a (179 aa).

The first 20 residues, 1-20 (MKFSLFFGVLFLAILHSCLS), serve as a signal peptide directing secretion. Residues 21–47 (ESEKDLTDEDHFRSSDSFLSEIQEESR) constitute a propeptide that is removed on maturation. The Processing quadruplet motif motif lies at 44–47 (EESR). Cystine bridges form between Cys51–Cys66, Cys58–Cys75, Cys65–Cys88, Cys77–Cys86, Cys115–Cys130, Cys122–Cys139, Cys129–Cys158, and Cys141–Cys156. Val178 is modified (valine amide).

The protein belongs to the spider toxin CSTX family. Double-CSTX subfamily. Post-translationally, cleavage of the propeptide depends on the processing quadruplet motif (XXXR, with at least one of X being E). Expressed by the venom gland.

The protein localises to the secreted. Its function is as follows. Spider venom toxin that exhibits cytolytic activity by forming an alpha-helix across the membrane. Lethal to insect larvae. The sequence is that of DELTA-miturgitoxin-Cp2a from Cheiracanthium punctorium (Yellow sac spider).